The sequence spans 423 residues: COP9 signalosome complex subunit 3 (423 aa).

At Ala-2 the chain carries N-acetylalanine. In terms of domain architecture, PCI spans 197–365 (NFERALYFYE…GMVSFHDNPE (169 aa)). Residues 402-423 (QFVQKSMGSQEDDSGNKPSSYS) form a disordered region. Ser-407, Ser-410, and Ser-423 each carry phosphoserine.

This sequence belongs to the CSN3 family. In terms of assembly, component of the CSN complex, composed of COPS1/GPS1, COPS2, COPS3, COPS4, COPS5, COPS6, COPS7 (COPS7A or COPS7B), COPS8 and COPS9 isoform 1. In the complex, it probably interacts directly with COPS1, COPS4, COPS8 and COPS9 isoform 1. Interacts with CK2 and PKD. Interacts with the translation initiation factor EIF3S6 and IKBKG. Interacts with ERCC6. As to expression, widely expressed. Expressed at high level in heart and skeletal muscle.

It is found in the cytoplasm. Its subcellular location is the nucleus. In terms of biological role, component of the COP9 signalosome complex (CSN), a complex involved in various cellular and developmental processes. The CSN complex is an essential regulator of the ubiquitin (Ubl) conjugation pathway by mediating the deneddylation of the cullin subunits of SCF-type E3 ligase complexes, leading to decrease the Ubl ligase activity of SCF-type complexes such as SCF, CSA or DDB2. The complex is also involved in phosphorylation of p53/TP53, c-jun/JUN, IkappaBalpha/NFKBIA, ITPK1 and IRF8/ICSBP, possibly via its association with CK2 and PKD kinases. CSN-dependent phosphorylation of TP53 and JUN promotes and protects degradation by the Ubl system, respectively. This is COP9 signalosome complex subunit 3 (COPS3) from Homo sapiens (Human).